The following is a 20-amino-acid chain: DELTA-actitoxin-Afr1b (20 aa).

This sequence belongs to the actinoporin family. Sea anemone subfamily. In terms of assembly, octamer or nonamer in membranes. Monomer in the soluble state.

Its subcellular location is the secreted. The protein resides in the nematocyst. It localises to the target cell membrane. Functionally, pore-forming toxin (PFT) that consists of a crown-shaped octamer or nonamer that forms cation-selective hydrophilic pores of about 1.5 nm (inside) and 13 nm (outside) and causes cytolysis. It causes cardiac stimulation. Also causes hemolysis (HC(50)=0.4 nM). Interestingly, the Phe-16 is crucial for hemolysis. Pore formation is a multi-step process that involves specific recognition of membrane sphingomyelin (but neither cholesterol nor phosphatidylcholine) using aromatic rich region and adjacent phosphocholine (POC) binding site, firm binding to the membrane (mainly driven by hydrophobic interactions) accompanied by the transfer of the N-terminal region to the lipid-water interface and finally pore formation after oligomerization of monomers. It is probable that a dimeric form is an assembly intermediate before the complete oligomerization. The formation of stable pores occurs only in vesicles composed of DOPC/SM (there is no oligomerization when the PFT is treated with vesicles of DOPC or SM alone). The transmembrane pore displays 8 lateral perforations, one at each subunit-subunit interface, partially occupied by the acyl-chain region of a bridging lipid. Each pore contains 24 lipid molecules, firmly bound to each subunit, that is, 3 lipids (L1, L2, L3, L4 and/or L5) are associated to each subunit. Lipid L1 bridges 2 subunits, whereas lipids L2 and L3 bind to sites at single subunit. This is DELTA-actitoxin-Afr1b from Actinia fragacea (Strawberry anemone).